A 264-amino-acid polypeptide reads, in one-letter code: tRNA pseudouridine synthase A (264 aa).

Aspartate 51 acts as the Nucleophile in catalysis. Residue tyrosine 109 coordinates substrate.

This sequence belongs to the tRNA pseudouridine synthase TruA family. Homodimer.

The enzyme catalyses uridine(38/39/40) in tRNA = pseudouridine(38/39/40) in tRNA. Formation of pseudouridine at positions 38, 39 and 40 in the anticodon stem and loop of transfer RNAs. This is tRNA pseudouridine synthase A from Vibrio vulnificus (strain CMCP6).